Consider the following 302-residue polypeptide: uncharacterized protein (302 aa).

N-linked (GlcNAc...) asparagine glycosylation is found at asparagine 32, asparagine 39, and asparagine 94. Residues 80–115 form the ShKT domain; the sequence is CRDTDMNCAVWVATNTSDCENVELVNSHCPRTCQTC. 3 disulfide bridges follow: cysteine 80–cysteine 115, cysteine 87–cysteine 108, and cysteine 98–cysteine 112. An N-linked (GlcNAc...) asparagine glycan is attached at asparagine 181.

This is an uncharacterized protein from Caenorhabditis elegans.